Here is a 232-residue protein sequence, read N- to C-terminus: Chaperone protein LpfB (232 aa).

Positions 1–23 (MNRSRLISCTALVLALIAQNSFA) are cleaved as a signal peptide.

This sequence belongs to the periplasmic pilus chaperone family.

The protein resides in the periplasm. Functionally, required for the biogenesis of long polar fimbria; binds and interact with LpfA. This Salmonella typhimurium (strain LT2 / SGSC1412 / ATCC 700720) protein is Chaperone protein LpfB (lpfB).